Consider the following 380-residue polypeptide: MAAAVHGALKAVGEDFYRDAIEHCRSYNARLSAERSTRLPFLDAQTGVAQSDCYIWMERSHRGPGLSPGQIYSYPARCWRKKRRLNILEDPRLRPLCDAPQKKELGSAVAEGAVLEALLCAEPPKEPKEEEALLDCQKPPPGDFAHDAEGDEMEDDAPRRKNKAKGKTYGLGAVRKRQDAAALEDRDKPYVCDICGKRYKNRPGLSYHYTHTHLAEEEGEESAERHPLPFQRRNHHKQFYKELNWVPESQRRHAAAAGRRSEGPCDFCVGGAVRRAALGHEEMIACADCGRAGHPSCLQFTLAMAAAARSYRWQCIECKNCSLCGSAENDEQLLFCDDCDRGYHMYCISPPVAEPPEGTWSCHLCLRQLKDKAAAFITLT.

A disordered region spans residues 132-164 (ALLDCQKPPPGDFAHDAEGDEMEDDAPRRKNKA). The segment at 190–213 (YVCDICGKRYKNRPGLSYHYTHTH) adopts a C2H2-type zinc-finger fold. 2 PHD-type zinc fingers span residues 262 to 321 (EGPC…CKNC) and 318 to 368 (CKNC…CLRQ). Residues Cys265, Cys268, Cys286, Cys289, His294, Cys297, Cys315, Cys318, Cys321, Cys324, Cys336, Cys339, His344, Cys347, Cys362, and Cys365 each contribute to the Zn(2+) site.

The protein belongs to the requiem/DPF family. As to quaternary structure, component of neuron-specific chromatin remodeling complex (nBAF complex), a subfamily of ATP-dependent SWI/SNF chromatin remodeling complexes.

It is found in the cytoplasm. Its subcellular location is the nucleus. Functionally, may have an important role in developing neurons by participating in regulation of cell survival, possibly as a neurospecific transcription factor. Belongs to the neuron-specific chromatin remodeling complex (nBAF complex) and plays a role in neural development. This chain is Zinc finger protein neuro-d4, found in Gallus gallus (Chicken).